The following is a 234-amino-acid chain: Triosephosphate isomerase (234 aa).

8–10 contacts substrate; it reads NFK. The active-site Electrophile is the H90. E159 (proton acceptor) is an active-site residue. Substrate contacts are provided by residues G165, S197, and 218 to 219; that span reads GS.

Homodimer.

The protein localises to the cytoplasm. It carries out the reaction D-glyceraldehyde 3-phosphate = dihydroxyacetone phosphate. Its pathway is carbohydrate biosynthesis; gluconeogenesis. It participates in carbohydrate degradation; glycolysis; D-glyceraldehyde 3-phosphate from glycerone phosphate: step 1/1. Functionally, involved in the gluconeogenesis. Catalyzes stereospecifically the conversion of dihydroxyacetone phosphate (DHAP) to D-glyceraldehyde-3-phosphate (G3P). This Helicobacter pylori (strain ATCC 700392 / 26695) (Campylobacter pylori) protein is Triosephosphate isomerase.